Consider the following 334-residue polypeptide: Mevalonate kinase (334 aa).

110–120 (PVGAGLGSSAA) contacts ATP. Aspartate 161 serves as the catalytic Proton acceptor.

It belongs to the GHMP kinase family. Mevalonate kinase subfamily. As to quaternary structure, homodimer. The cofactor is Mg(2+).

It localises to the cytoplasm. It catalyses the reaction (R)-mevalonate + ATP = (R)-5-phosphomevalonate + ADP + H(+). It participates in isoprenoid biosynthesis; isopentenyl diphosphate biosynthesis via mevalonate pathway; isopentenyl diphosphate from (R)-mevalonate: step 1/3. Catalyzes the phosphorylation of (R)-mevalonate (MVA) to (R)-mevalonate 5-phosphate (MVAP). Functions in the mevalonate (MVA) pathway leading to isopentenyl diphosphate (IPP), a key precursor for the biosynthesis of isoprenoid compounds such as archaeal membrane lipids. This is Mevalonate kinase from Thermococcus onnurineus (strain NA1).